Here is a 332-residue protein sequence, read N- to C-terminus: Beta-1,3-N-acetylglucosaminyltransferase radical fringe (332 aa).

At 1–6 the chain is on the cytoplasmic side; sequence MSRARR. The helical; Signal-anchor for type II membrane protein transmembrane segment at 7-29 threads the bilayer; it reads VLCRACLALAAVLAVLLLLPLPL. Residues 30-332 are Lumenal-facing; sequence PLPLPRAPAP…MKNRVEGAFQ (303 aa). R75 provides a ligand contact to substrate. N-linked (GlcNAc...) asparagine glycosylation is present at N114. 2 disulfide bridges follow: C115-C126 and C144-C208. D148 lines the substrate pocket. Mn(2+) is bound at residue D149. D238 is an active-site residue. H262 contributes to the Mn(2+) binding site. A disulfide bridge links C312 with C321.

Belongs to the glycosyltransferase 31 family. It depends on Mn(2+) as a cofactor. Detected in all the examined tissues (12.5 dpc). High expression found in adult brain.

The protein localises to the golgi apparatus membrane. The catalysed reaction is 3-O-(alpha-L-fucosyl)-L-threonyl-[EGF-like domain protein] + UDP-N-acetyl-alpha-D-glucosamine = 3-O-(N-acetyl-beta-D-glucosaminyl-(1-&gt;3)-alpha-L-fucosyl)-L-threonyl-[EGF-like domain protein] + UDP + H(+). The enzyme catalyses 3-O-(alpha-L-fucosyl)-L-seryl-[EGF-like domain protein] + UDP-N-acetyl-alpha-D-glucosamine = 3-O-(N-acetyl-beta-D-glucosaminyl-(1-&gt;3)-alpha-L-fucosyl)-L-seryl-[EGF-like domain protein] + UDP + H(+). Its function is as follows. Glycosyltransferase that initiates the elongation of O-linked fucose residues attached to EGF-like repeats in the extracellular domain of Notch molecules. Modulates NOTCH1 activity by modifying O-fucose residues at specific EGF-like domains resulting in enhancement of NOTCH1 activation by DLL1 and JAG1. May be involved in limb formation and in neurogenesis. This chain is Beta-1,3-N-acetylglucosaminyltransferase radical fringe, found in Mus musculus (Mouse).